A 235-amino-acid chain; its full sequence is Protein mxl-3 (235 aa).

The tract at residues 18 to 49 is disordered; sequence EKQFRKRHHSDSSDDDSSSPKSASPSMDDDRR. Residues 47–60 form a basic motif region; it reads DRRAHHNELERRRR. Residues 47 to 98 form the bHLH domain; it reads DRRAHHNELERRRRDHIKDHFTILKDAIPLLDGEKSSRALILKRAVEFIHVM. Residues 61–98 are helix-loop-helix motif; sequence DHIKDHFTILKDAIPLLDGEKSSRALILKRAVEFIHVM.

Belongs to the MAX family. May form homodimer. Interacts (via N-terminus) with skn-1 isoforms a and c. As to expression, expressed in the intestine and in the AWC sensory neurons.

The protein localises to the nucleus. Its subcellular location is the cytoplasm. Transcription factor which regulates the expression of genes involved in lipid metabolism in response to nutrient availability. Binds to the E-box motif 5'-CACGTG-3'. Under well-fed conditions, binds to the promoter and represses the expression of lipase genes lipl-1, lipl-2, lipl-3 and to a lesser extent lipl-5, thereby preventing lipolysis. In response to a high-glucose diet, promotes fatty acid synthesis, elongation and desaturation by up-regulating transcription factor sbp-1 expression. Under well-fed conditions, acts remotely in the intestine to up-regulate the expression of chemoreceptor srh-234 gene in the ADL sensory neuron, possibly by regulating the insulin signaling pathway. The polypeptide is Protein mxl-3 (Caenorhabditis elegans).